We begin with the raw amino-acid sequence, 215 residues long: Cytochrome b6 (215 aa).

Residues 32 to 52 (IFYCLGGITLTCFLVQVATGF) form a helical membrane-spanning segment. Heme c is bound at residue C35. H86 and H100 together coordinate heme b. Helical transmembrane passes span 90-110 (ASMMVLMTILHVFRVYLTGGF), 116-136 (LTWVTGVVLAVLTASFGVTGY), and 186-206 (LHTFVLPLLTAVFMLMHFLMI). Heme b contacts are provided by H187 and H202.

The protein belongs to the cytochrome b family. PetB subfamily. In terms of assembly, the 4 large subunits of the cytochrome b6-f complex are cytochrome b6, subunit IV (17 kDa polypeptide, PetD), cytochrome f and the Rieske protein, while the 4 small subunits are PetG, PetL, PetM and PetN. The complex functions as a dimer. Heme b serves as cofactor. Requires heme c as cofactor.

It is found in the plastid. The protein localises to the chloroplast thylakoid membrane. Functionally, component of the cytochrome b6-f complex, which mediates electron transfer between photosystem II (PSII) and photosystem I (PSI), cyclic electron flow around PSI, and state transitions. The chain is Cytochrome b6 from Citrus sinensis (Sweet orange).